Here is a 116-residue protein sequence, read N- to C-terminus: UPF0102 protein PERMA_0362 (116 aa).

It belongs to the UPF0102 family.

The chain is UPF0102 protein PERMA_0362 from Persephonella marina (strain DSM 14350 / EX-H1).